The following is an 892-amino-acid chain: Alanine--tRNA ligase (892 aa).

Residues His-574, His-578, Cys-676, and His-680 each contribute to the Zn(2+) site.

This sequence belongs to the class-II aminoacyl-tRNA synthetase family. Requires Zn(2+) as cofactor.

Its subcellular location is the cytoplasm. It carries out the reaction tRNA(Ala) + L-alanine + ATP = L-alanyl-tRNA(Ala) + AMP + diphosphate. Catalyzes the attachment of alanine to tRNA(Ala) in a two-step reaction: alanine is first activated by ATP to form Ala-AMP and then transferred to the acceptor end of tRNA(Ala). Also edits incorrectly charged Ser-tRNA(Ala) and Gly-tRNA(Ala) via its editing domain. This is Alanine--tRNA ligase from Prochlorococcus marinus (strain SARG / CCMP1375 / SS120).